An 81-amino-acid polypeptide reads, in one-letter code: Styelin-D (81 aa).

The N-terminal stretch at M1–A22 is a signal peptide. W24 is subject to 6'-bromotryptophan. R26 carries the 3,4-dihydroxyarginine modification. 4,5-dihydroxylysine is present on residues K27, K30, and K34. 3',4'-dihydroxyphenylalanine occurs at positions 36 and 37. K38 is subject to 4,5-dihydroxylysine. K40 bears the 5-hydroxylysine mark. Residues Y41 and Y42 each carry the 3',4'-dihydroxyphenylalanine modification. K44 is subject to 5-hydroxylysine. L54 is subject to Leucine amide. A propeptide spans D56–Q81 (removed in mature form).

Post-translationally, contains L-DOPA (3',4'-dihydroxyphenylalanine). In terms of tissue distribution, hemocytes and pharyngeal tissues.

The protein resides in the secreted. Its function is as follows. Bactericidal against several Gram-positive and Gram-negative bacteria. Plays a significant role in the innate immune mechanisms of S.clava. The polypeptide is Styelin-D (Styela clava (Sea squirt)).